Consider the following 471-residue polypeptide: Glycosyl hydrolase family 109 protein 1 (471 aa).

The first 15 residues, 1–15 (MIKNLSTFFVGIALS), serve as a signal peptide directing secretion. C16 carries the N-palmitoyl cysteine lipid modification. The S-diacylglycerol cysteine moiety is linked to residue C16. Residues 70-71 (MR), D92, 141-144 (WKHH), 161-162 (EV), and N190 contribute to the NAD(+) site. Substrate is bound by residues Y219, R235, 247 to 250 (YATH), and Y325. Y247 is a binding site for NAD(+).

It belongs to the Gfo/Idh/MocA family. Glycosyl hydrolase 109 subfamily. The cofactor is NAD(+).

It localises to the cell membrane. Functionally, glycosidase. In Phocaeicola vulgatus (strain ATCC 8482 / DSM 1447 / JCM 5826 / CCUG 4940 / NBRC 14291 / NCTC 11154) (Bacteroides vulgatus), this protein is Glycosyl hydrolase family 109 protein 1.